The chain runs to 246 residues: tRNA (guanine-N(1)-)-methyltransferase (246 aa).

Residues glycine 114 and 134–139 (IGDYIL) contribute to the S-adenosyl-L-methionine site.

This sequence belongs to the RNA methyltransferase TrmD family. Homodimer.

Its subcellular location is the cytoplasm. The catalysed reaction is guanosine(37) in tRNA + S-adenosyl-L-methionine = N(1)-methylguanosine(37) in tRNA + S-adenosyl-L-homocysteine + H(+). Its function is as follows. Specifically methylates guanosine-37 in various tRNAs. In Coxiella burnetii (strain CbuG_Q212) (Coxiella burnetii (strain Q212)), this protein is tRNA (guanine-N(1)-)-methyltransferase.